A 62-amino-acid polypeptide reads, in one-letter code: Alpha-conotoxin ViIA (62 aa).

A signal peptide spans 1 to 18 (MGMRMMFVVFLLVVFASS). The propeptide occupies 19–45 (VTLDRASYGRYASPVDRASALIAQAIL). Disulfide bonds link C48/C54 and C49/C61.

This sequence belongs to the conotoxin A superfamily. In terms of processing, the toxin is inactive on the alpha-3-beta-2 nAChR when the disulfide bond connectivity is C1-C4 and C2-C3 (ViIA-I) (IC(50)&gt;10000 nM). Expressed by the venom duct.

The protein localises to the secreted. In terms of biological role, alpha-conotoxins act on postsynaptic membranes, they bind to the nicotinic acetylcholine receptors (nAChR) and thus inhibit them. This toxin selectively inhibits nicotinic acetylcholine receptor (nAChR) alpha-3-beta-2 subtype (IC(50)=845.5 nM). This chain is Alpha-conotoxin ViIA, found in Conus virgo (Virgin cone).